We begin with the raw amino-acid sequence, 520 residues long: Developmental regulatory protein wetA (520 aa).

Disordered stretches follow at residues 49-72, 104-165, 236-295, 367-453, and 471-496; these read GDLP…NEWS, VPSR…MRSS, QSPS…WQSD, DHSF…GSNK, and LTGV…RRRK. 3 stretches are compositionally biased toward polar residues: residues 63–72, 104–114, and 155–165; these read SPQPWSNEWS, VPSRPTASHGL, and QSFSPSLMRSS. Residues 237 to 251 are compositionally biased toward low complexity; it reads SPSVSMPSPSIAMSA. Positions 252–261 are enriched in polar residues; the sequence is RQQQHYIAQP. Positions 262–295 are enriched in low complexity; sequence SSSSLTNSSPSSADDIFSSSHSSDPHSLSSWQSD. The span at 367 to 401 shows a compositional bias: polar residues; that stretch reads DHSFSSSNMLPATPQKFDTSFNTSQVHNVSRSPSL. A compositionally biased stretch (basic residues) spans 420-429; the sequence is PTHRRTHSRK. Positions 436 to 453 are enriched in low complexity; it reads NAPKPAKASGSSSRGSNK.

This sequence belongs to the wetA family.

BrlA, abaA and wetA are pivotal regulators of conidiophore development and conidium maturation. They act individually and together to regulate their own expression and that of numerous other sporulation-specific genes. Responsible for activating a set of genes whose products make up the final two conidial wall layers or direct their assembly and though this activity is responsible for acquisition of spore dormancy. In Penicillium rubens (strain ATCC 28089 / DSM 1075 / NRRL 1951 / Wisconsin 54-1255) (Penicillium chrysogenum), this protein is Developmental regulatory protein wetA.